Here is a 255-residue protein sequence, read N- to C-terminus: Anamorsin homolog (255 aa).

The N-terminal SAM-like domain stretch occupies residues 1 to 163 (MPKETLVVSK…VRPNWKSKTD (163 aa)). The tract at residues 164 to 185 (KKSPSMIDAAPIDGYISKAPDY) is linker. [2Fe-2S] cluster is bound by residues Cys188, Cys195, Cys198, and Cys200. Positions 188–200 (CSTKPRACANCTC) are fe-S binding site A. Residues Cys224, Cys227, Cys235, and Cys238 each contribute to the [4Fe-4S] cluster site. 2 consecutive short sequence motifs (cx2C motif) follow at residues 224-227 (CGNC) and 235-238 (CESC). Positions 224 to 238 (CGNCYLGDAFRCESC) are fe-S binding site B.

The protein belongs to the anamorsin family. Monomer. The cofactor is [2Fe-2S] cluster. Requires [4Fe-4S] cluster as cofactor.

It is found in the cytoplasm. The protein resides in the mitochondrion intermembrane space. Component of the cytosolic iron-sulfur (Fe-S) protein assembly (CIA) machinery. Required for the maturation of extramitochondrial Fe-S proteins. Part of an electron transfer chain functioning in an early step of cytosolic Fe-S biogenesis, facilitating the de novo assembly of a [4Fe-4S] cluster on the cytosolic Fe-S scaffold complex. Electrons are transferred from NADPH via a FAD- and FMN-containing diflavin oxidoreductase. Together with the diflavin oxidoreductase, also required for the assembly of the diferric tyrosyl radical cofactor of ribonucleotide reductase (RNR), probably by providing electrons for reduction during radical cofactor maturation in the catalytic small subunit. This chain is Anamorsin homolog, found in Theileria annulata.